The primary structure comprises 367 residues: Aminomethyltransferase (367 aa).

The protein belongs to the GcvT family. As to quaternary structure, the glycine cleavage system is composed of four proteins: P, T, L and H.

The catalysed reaction is N(6)-[(R)-S(8)-aminomethyldihydrolipoyl]-L-lysyl-[protein] + (6S)-5,6,7,8-tetrahydrofolate = N(6)-[(R)-dihydrolipoyl]-L-lysyl-[protein] + (6R)-5,10-methylene-5,6,7,8-tetrahydrofolate + NH4(+). Its function is as follows. The glycine cleavage system catalyzes the degradation of glycine. This Lysinibacillus sphaericus (strain C3-41) protein is Aminomethyltransferase.